Reading from the N-terminus, the 514-residue chain is ATP synthase subunit alpha (514 aa).

170–177 is a binding site for ATP; the sequence is GDRQIGKT.

This sequence belongs to the ATPase alpha/beta chains family. F-type ATPases have 2 components, CF(1) - the catalytic core - and CF(0) - the membrane proton channel. CF(1) has five subunits: alpha(3), beta(3), gamma(1), delta(1), epsilon(1). CF(0) has three main subunits: a(1), b(2) and c(9-12). The alpha and beta chains form an alternating ring which encloses part of the gamma chain. CF(1) is attached to CF(0) by a central stalk formed by the gamma and epsilon chains, while a peripheral stalk is formed by the delta and b chains.

The protein localises to the cell inner membrane. The catalysed reaction is ATP + H2O + 4 H(+)(in) = ADP + phosphate + 5 H(+)(out). Functionally, produces ATP from ADP in the presence of a proton gradient across the membrane. The alpha chain is a regulatory subunit. This chain is ATP synthase subunit alpha, found in Pseudomonas aeruginosa (strain LESB58).